The chain runs to 560 residues: Protein SINE1 (560 aa).

Glycine 2 is modified (N-acetylglycine). The ARMADILLO-type fold stretch occupies residues 7 to 287 (PILRQELANL…VRGAAYEAMM (281 aa)). A KASH domain is found at 517-560 (KKKKKKMSYAKLVIAISFVVVALFATVILMVNQDDDVGYYTVPT). The helical transmembrane segment at 528–548 (LVIAISFVVVALFATVILMVN) threads the bilayer. The Required for nuclear localization motif lies at 557–560 (TVPT).

Interacts with SUN1 and SUN2. Binds to F-actin. In terms of tissue distribution, preferentially expressed in guards cells, but also detected in root cells.

It is found in the nucleus membrane. In terms of biological role, plays a role in nucleus positioning in guard cells. This Arabidopsis thaliana (Mouse-ear cress) protein is Protein SINE1.